The following is a 268-amino-acid chain: Energy-coupling factor transporter transmembrane protein EcfT (268 aa).

Helical transmembrane passes span 29–49, 75–95, 107–127, 152–172, and 242–262; these read VFIFLVFMFMTRDPLLLTVAV, IIIVLTFVLHLFMTGGGEVIV, LIEGFMLAMKLAMIITIASLL, LPTHELALMMSIALRFIPTLI, and WGLKDSVVLAVFLLFAAAVMA.

This sequence belongs to the energy-coupling factor EcfT family. Forms a stable energy-coupling factor (ECF) transporter complex composed of 2 membrane-embedded substrate-binding proteins (S component), 2 ATP-binding proteins (A component) and 2 transmembrane proteins (T component). May be able to interact with more than 1 S component at a time.

Its subcellular location is the cell membrane. Transmembrane (T) component of an energy-coupling factor (ECF) ABC-transporter complex. Unlike classic ABC transporters this ECF transporter provides the energy necessary to transport a number of different substrates. The polypeptide is Energy-coupling factor transporter transmembrane protein EcfT (Bacillus selenitireducens (strain ATCC 700615 / DSM 15326 / MLS10)).